Reading from the N-terminus, the 212-residue chain is tRNA (guanine-N(7)-)-methyltransferase (212 aa).

The S-adenosyl-L-methionine site is built by Glu44, Asp69, Asp96, and Asp118. Asp118 is an active-site residue. Residue Lys122 coordinates substrate. The interval 124–129 (RHEKRR) is interaction with RNA. Residues Asp154 and 191–194 (TEYE) each bind substrate.

This sequence belongs to the class I-like SAM-binding methyltransferase superfamily. TrmB family.

The catalysed reaction is guanosine(46) in tRNA + S-adenosyl-L-methionine = N(7)-methylguanosine(46) in tRNA + S-adenosyl-L-homocysteine. It participates in tRNA modification; N(7)-methylguanine-tRNA biosynthesis. In terms of biological role, catalyzes the formation of N(7)-methylguanine at position 46 (m7G46) in tRNA. The chain is tRNA (guanine-N(7)-)-methyltransferase from Streptococcus gordonii (strain Challis / ATCC 35105 / BCRC 15272 / CH1 / DL1 / V288).